The chain runs to 649 residues: Quinol oxidase subunit 1 (649 aa).

Over Met-1–Asp-13 the chain is Extracellular. Residues Pro-14–Leu-34 traverse the membrane as a helical segment. Residues Thr-35–Lys-55 are Cytoplasmic-facing. The chain crosses the membrane as a helical span at residues Leu-56–Leu-76. The Extracellular segment spans residues Met-77–Thr-104. His-102 serves as a coordination point for Fe(II)-heme a. Residues Ile-105–Leu-125 traverse the membrane as a helical segment. Residues Gln-126–Asn-139 lie on the Cytoplasmic side of the membrane. Residues Leu-140–Gly-160 form a helical membrane-spanning segment. Over Ser-161–Leu-187 the chain is Extracellular. The helical transmembrane segment at Leu-188 to Ile-208 threads the bilayer. The Cytoplasmic segment spans residues Leu-209–Thr-228. A helical transmembrane segment spans residues Leu-229–Leu-249. The Extracellular segment spans residues Ser-250–Asn-273. The helical transmembrane segment at Leu-274–Phe-294 threads the bilayer. Cu cation-binding residues include His-280 and Tyr-284. The 1'-histidyl-3'-tyrosine (His-Tyr) cross-link spans His-280 to Tyr-284. Topologically, residues Ser-295–Gln-305 are cytoplasmic. Residues Leu-306 to Val-326 traverse the membrane as a helical segment. Residues Trp-327–Ser-342 lie on the Extracellular side of the membrane. The Cu cation site is built by His-329 and His-330. Residues Phe-343–Leu-363 traverse the membrane as a helical segment. At Phe-364 to Pro-376 the chain is on the cytoplasmic side. The helical transmembrane segment at Met-377–Leu-397 threads the bilayer. The Extracellular portion of the chain corresponds to Ala-398 to His-415. Residue His-415 coordinates heme a3. Residues Phe-416 to Tyr-436 traverse the membrane as a helical segment. His-417 provides a ligand contact to Fe(II)-heme a. Topologically, residues Pro-437 to Trp-451 are cytoplasmic. Residues Phe-452–Leu-472 form a helical membrane-spanning segment. The Extracellular segment spans residues Gln-473 to Asn-492. A helical transmembrane segment spans residues Phe-493 to Ile-513. The Cytoplasmic portion of the chain corresponds to Tyr-514–Asn-585. A helical membrane pass occupies residues Ser-586–Leu-603. Topologically, residues Val-604–Glu-606 are extracellular. The chain crosses the membrane as a helical span at residues Trp-607–Leu-624. Residues Arg-625–Glu-649 are Cytoplasmic-facing.

The protein belongs to the heme-copper respiratory oxidase family. Cu cation is required as a cofactor. Ferriheme a serves as cofactor. Requires Heme A3. as cofactor.

The protein localises to the cell membrane. It catalyses the reaction 2 a quinol + O2 = 2 a quinone + 2 H2O. Its pathway is energy metabolism; oxidative phosphorylation. Its function is as follows. Catalyzes quinol oxidation with the concomitant reduction of oxygen to water. Major component for energy conversion during vegetative growth. The sequence is that of Quinol oxidase subunit 1 (qoxB) from Bacillus spizizenii (strain ATCC 23059 / NRRL B-14472 / W23) (Bacillus subtilis subsp. spizizenii).